The chain runs to 465 residues: Phytase A (465 aa).

The N-terminal stretch at 1–26 (MVTLTFLLSAAYLLSGRVSAAPSSAG) is a signal peptide. A disulfide bridge links C30 with C39. Residues Q49, Y50, R80, H81, R84, and T87 each coordinate 1D-myo-inositol hexakisphosphate. Intrachain disulfides connect C70/C412, C213/C463, C262/C280, and C434/C442. H81 (nucleophile) is an active-site residue. An N-linked (GlcNAc...) asparagine glycan is attached at N104. 1D-myo-inositol hexakisphosphate is bound at residue R164. N-linked (GlcNAc...) asparagine glycosylation is present at N205. Position 209 (D209) interacts with 1D-myo-inositol hexakisphosphate. A glycan (N-linked (GlcNAc...) asparagine) is linked at N228. A 1D-myo-inositol hexakisphosphate-binding site is contributed by K299. N-linked (GlcNAc...) asparagine glycosylation is found at N337 and N350. 1D-myo-inositol hexakisphosphate-binding residues include H359 and D360. N-linked (GlcNAc...) asparagine glycosylation occurs at N374.

The protein belongs to the histidine acid phosphatase family. Monomer.

The protein localises to the secreted. The enzyme catalyses 1D-myo-inositol hexakisphosphate + H2O = 1D-myo-inositol 1,2,4,5,6-pentakisphosphate + phosphate. It carries out the reaction 1D-myo-inositol 1,2,4,5,6-pentakisphosphate + H2O = 1D-myo-inositol 1,2,5,6-tetrakisphosphate + phosphate. It catalyses the reaction 1D-myo-inositol 1,2,5,6-tetrakisphosphate + H2O = 1D-myo-inositol 1,2,6-trisphosphate + phosphate. The catalysed reaction is 1D-myo-inositol 1,2,6-trisphosphate + H2O = 1D-myo-inositol 1,2-bisphosphate + phosphate. The enzyme catalyses 1D-myo-inositol 1,2-bisphosphate + H2O = 1D-myo-inositol 2-phosphate + phosphate. In terms of biological role, catalyzes the phosphate monoester hydrolysis of phytic acid (myo-inositol hexakisphosphate), which results in the stepwise formation of myo-inositol pentakis-, tetrakis-, tris-, bis-, and monophosphates, as well as the liberation of inorganic phosphate. Myo-inositol 2-monophosphate is the end product. Has a broad substrate specificity and is also able to dephosphorylate other classic acid phosphatase substrates such as p-nitrophenyl phosphate, phenyl phosphate, fructose 1,6-bisphosphate, fructose 6-phosphate, glucose 6-phosphate, ribose 5-phosphate, alpha-glycerophosphate, beta-glycerophosphate, 3-phosphoglycerate, phosphoenolpyruvate, as well as ADP and ATP. The protein is Phytase A (phyA) of Aspergillus fumigatus (strain ATCC MYA-4609 / CBS 101355 / FGSC A1100 / Af293) (Neosartorya fumigata).